The primary structure comprises 295 residues: MSAANPETPNSTISREASTQSSSAAASQGYVLPEGKIMPNTVFVGGIDVRMDETEIRSFFARYGSVKEVKIITDRTGVSKGYGFVSFFNDVDVQKIVESQINFHGKKLKLGPAIRKQNLCAYHVQPRPLVFNHPPPPQFQNVWTNPNTETYMQPPTTMNPITQYVQAYPTYPNSPVQVITGYQLPVYNYQMPPQWPVGEQRSYVVPPAYSAVNYHCNEVDPGAEVVPNECSVHEATPPSGNGPQKKSVDRSIQTVVSCLFNPENRLRNTVVTQDDYFKDKRVHHFRRSRAMLKSV.

Positions 1–10 (MSAANPETPN) are enriched in polar residues. The segment at 1–25 (MSAANPETPNSTISREASTQSSSAA) is disordered. Residues 11-25 (STISREASTQSSSAA) show a composition bias toward low complexity. Positions 40–115 (NTVFVGGIDV…KKLKLGPAIR (76 aa)) constitute an RRM domain. The tract at residues 80–132 (KGYGFVSFFNDVDVQKIVESQINFHGKKLKLGPAIRKQNLCAYHVQPRPLVFN) is homodimerization. A DAZ domain is found at 167–190 (AYPTYPNSPVQVITGYQLPVYNYQ). Y276 bears the Phosphotyrosine mark.

It belongs to the RRM DAZ family. Homodimer and heterodimer. Forms a heterodimer with DAZ. Interacts with BOLL, DAZAP1 and DAZAP2. Interacts with PUM2 Multiple DAZL RRMs can bind to a single RNA containing multiple GUU triplets. In terms of tissue distribution, testis specific.

The protein localises to the cytoplasm. It localises to the nucleus. Functionally, RNA-binding protein, which is essential for gametogenesis in both males and females. Plays a central role during spermatogenesis. Acts by binding to the 3'-UTR of mRNA, specifically recognizing GUU triplets, and thereby regulating the translation of key transcripts. The polypeptide is Deleted in azoospermia-like (DAZL) (Macaca fascicularis (Crab-eating macaque)).